We begin with the raw amino-acid sequence, 207 residues long: Reticulon-1-A (207 aa).

A Reticulon domain is found at Ala21–Glu207. Helical transmembrane passes span Ile35 to Val55 and Val139 to Met159.

As to expression, expressed in the animal hemisphere (presumptive neural ectoderm) of blastula and gastrula stage embryos, and along the anterior neural border, in the panplacodal primordium, and in the dorsolateral side of archenteron roof of late neurula embryos. At the tailbud stage, expression localizes to the central nervous system, including the spinal cord, prosencephalon, mesencephalon and rhombencephalon, as well as the lateral line placode, otic vesicle and pronephros.

The protein resides in the endoplasmic reticulum membrane. It localises to the nucleus. In terms of biological role, inhibits amyloid precursor protein processing, probably by blocking BACE1 activity. This chain is Reticulon-1-A (rtn1-a), found in Xenopus laevis (African clawed frog).